We begin with the raw amino-acid sequence, 144 residues long: Eukaryotic translation initiation factor 1A, X-chromosomal (144 aa).

Basic residues predominate over residues 1-15 (MPKNKGKGGKNRRRG). Disordered stretches follow at residues 1 to 26 (MPKN…KREL) and 114 to 144 (KINE…IDDI). Over residues 16–26 (KNENESEKREL) the composition is skewed to basic and acidic residues. The 75-residue stretch at 22–96 (EKRELVFKED…NKADVILKYN (75 aa)) folds into the S1-like domain. Over residues 124 to 144 (GDDDEIQFDDIGDDDEDIDDI) the composition is skewed to acidic residues.

This sequence belongs to the eIF-1A family. Component of the 43S pre-initiation complex (43S PIC), which is composed of the 40S ribosomal subunit, EIF1, eIF1A (EIF1AX), eIF3 complex, EIF5 and eIF2-GTP-initiator tRNA complex (eIF2 ternary complex). Interacts with EIF5; this interaction contributes to the maintenance of EIF1 within the open 43S PIC. Interacts through its C-terminal domain (CTD) with the CTD of EIF5B; from the location of the start codon by the 43S complex until the formation of the 80S complex. In terms of assembly, (Microbial infection) Interacts with human respiratory syncytial virus (HRSV) nucleoprotein; this interaction recruits EIF1AX to the viral replication complex to facilitate viral genomic RNA synthesis and virus production.

It localises to the cytoplasm. Functionally, component of the 43S pre-initiation complex (43S PIC), which binds to the mRNA cap-proximal region, scans mRNA 5'-untranslated region, and locates the initiation codon. This protein enhances formation of the cap-proximal complex. Together with EIF1, facilitates scanning, start codon recognition, promotion of the assembly of 48S complex at the initiation codon (43S PIC becomes 48S PIC after the start codon is reached), and dissociation of aberrant complexes. After start codon location, together with EIF5B orients the initiator methionine-tRNA in a conformation that allows 60S ribosomal subunit joining to form the 80S initiation complex. Is released after 80S initiation complex formation, just after GTP hydrolysis by EIF5B, and before release of EIF5B. Its globular part is located in the A site of the 40S ribosomal subunit. Its interaction with EIF5 during scanning contribute to the maintenance of EIF1 within the open 43S PIC. In contrast to yeast orthologs, does not bind EIF1. The sequence is that of Eukaryotic translation initiation factor 1A, X-chromosomal (EIF1AX) from Homo sapiens (Human).